The chain runs to 281 residues: Diaminopimelate epimerase (281 aa).

Residues Asn-13, Gln-46, and Asn-66 each coordinate substrate. Cys-75 (proton donor) is an active-site residue. Substrate contacts are provided by residues 76–77 (GN), Asn-160, Asn-193, and 211–212 (ER). Catalysis depends on Cys-220, which acts as the Proton acceptor. 221–222 (GT) contributes to the substrate binding site.

The protein belongs to the diaminopimelate epimerase family. In terms of assembly, homodimer.

The protein localises to the cytoplasm. It carries out the reaction (2S,6S)-2,6-diaminopimelate = meso-2,6-diaminopimelate. It functions in the pathway amino-acid biosynthesis; L-lysine biosynthesis via DAP pathway; DL-2,6-diaminopimelate from LL-2,6-diaminopimelate: step 1/1. Catalyzes the stereoinversion of LL-2,6-diaminopimelate (L,L-DAP) to meso-diaminopimelate (meso-DAP), a precursor of L-lysine and an essential component of the bacterial peptidoglycan. This chain is Diaminopimelate epimerase, found in Acinetobacter baylyi (strain ATCC 33305 / BD413 / ADP1).